The sequence spans 64 residues: Large ribosomal subunit protein bL35 (64 aa).

The tract at residues 1–25 is disordered; it reads MPKLKTHSGAAKRFKKTATGKVKRS.

It belongs to the bacterial ribosomal protein bL35 family.

This is Large ribosomal subunit protein bL35 from Koribacter versatilis (strain Ellin345).